The primary structure comprises 366 residues: tRNA/tmRNA (uracil-C(5))-methyltransferase (366 aa).

5 residues coordinate S-adenosyl-L-methionine: Gln-189, Tyr-217, Asn-222, Glu-238, and Asp-298. The active-site Nucleophile is the Cys-323. Residue Glu-357 is the Proton acceptor of the active site.

Belongs to the class I-like SAM-binding methyltransferase superfamily. RNA M5U methyltransferase family. TrmA subfamily.

The catalysed reaction is uridine(54) in tRNA + S-adenosyl-L-methionine = 5-methyluridine(54) in tRNA + S-adenosyl-L-homocysteine + H(+). The enzyme catalyses uridine(341) in tmRNA + S-adenosyl-L-methionine = 5-methyluridine(341) in tmRNA + S-adenosyl-L-homocysteine + H(+). In terms of biological role, dual-specificity methyltransferase that catalyzes the formation of 5-methyluridine at position 54 (m5U54) in all tRNAs, and that of position 341 (m5U341) in tmRNA (transfer-mRNA). The protein is tRNA/tmRNA (uracil-C(5))-methyltransferase of Idiomarina loihiensis (strain ATCC BAA-735 / DSM 15497 / L2-TR).